Reading from the N-terminus, the 193-residue chain is uncharacterized protein (193 aa).

2 disordered regions span residues 1–67 (MSGP…GPRS) and 110–160 (QRTP…LPGS). Low complexity-rich tracts occupy residues 50–64 (GPQR…ARPG) and 148–160 (AGAS…LPGS).

This is an uncharacterized protein from Homo sapiens (Human).